Consider the following 636-residue polypeptide: 1-deoxy-D-xylulose-5-phosphate synthase (636 aa).

Thiamine diphosphate is bound by residues His73 and 114-116 (SHA). A Mg(2+)-binding site is contributed by Asp146. Thiamine diphosphate-binding positions include 147–148 (GA), Asn176, Tyr287, and Glu368. Asn176 lines the Mg(2+) pocket.

This sequence belongs to the transketolase family. DXPS subfamily. Homodimer. The cofactor is Mg(2+). Requires thiamine diphosphate as cofactor.

The catalysed reaction is D-glyceraldehyde 3-phosphate + pyruvate + H(+) = 1-deoxy-D-xylulose 5-phosphate + CO2. The protein operates within metabolic intermediate biosynthesis; 1-deoxy-D-xylulose 5-phosphate biosynthesis; 1-deoxy-D-xylulose 5-phosphate from D-glyceraldehyde 3-phosphate and pyruvate: step 1/1. Functionally, catalyzes the acyloin condensation reaction between C atoms 2 and 3 of pyruvate and glyceraldehyde 3-phosphate to yield 1-deoxy-D-xylulose-5-phosphate (DXP). The chain is 1-deoxy-D-xylulose-5-phosphate synthase from Corynebacterium glutamicum (strain ATCC 13032 / DSM 20300 / JCM 1318 / BCRC 11384 / CCUG 27702 / LMG 3730 / NBRC 12168 / NCIMB 10025 / NRRL B-2784 / 534).